We begin with the raw amino-acid sequence, 246 residues long: Proteasome subunit alpha (246 aa).

This sequence belongs to the peptidase T1A family. The 20S proteasome core is composed of 14 alpha and 14 beta subunits that assemble into four stacked heptameric rings, resulting in a barrel-shaped structure. The two inner rings, each composed of seven catalytic beta subunits, are sandwiched by two outer rings, each composed of seven alpha subunits. The catalytic chamber with the active sites is on the inside of the barrel. Has probably a gated structure, the ends of the cylinder being occluded by the N-termini of the alpha-subunits. Is likely capped at one or both ends by the proteasome regulatory ATPase, PAN.

It is found in the cytoplasm. Its activity is regulated as follows. The formation of the proteasomal ATPase PAN-20S proteasome complex, via the docking of the C-termini of PAN into the intersubunit pockets in the alpha-rings, triggers opening of the gate for substrate entry. Interconversion between the open-gate and close-gate conformations leads to a dynamic regulation of the 20S proteasome proteolysis activity. Component of the proteasome core, a large protease complex with broad specificity involved in protein degradation. The polypeptide is Proteasome subunit alpha (Archaeoglobus fulgidus (strain ATCC 49558 / DSM 4304 / JCM 9628 / NBRC 100126 / VC-16)).